Here is a 152-residue protein sequence, read N- to C-terminus: Kininogen-1c (152 aa).

The signal sequence occupies residues 1–23 (MRLWFCLSLFIVLCLEHFPGTLA). Basic and acidic residues predominate over residues 28–44 (VPESEEKTEQFLRDLPK). Residues 28-152 (VPESEEKTEQ…RGKFHSQSHV (125 aa)) are disordered.

This sequence belongs to the bradykinin-related peptide family. Expressed by the skin glands.

It localises to the secreted. Functionally, potent vasodilator. Binds B1 (BDKRB1) and B2 (BDKRB2) bradykinin receptors. This is Kininogen-1c from Bombina maxima (Giant fire-bellied toad).